The chain runs to 114 residues: Large ribosomal subunit protein uL22 (114 aa).

This sequence belongs to the universal ribosomal protein uL22 family. Part of the 50S ribosomal subunit.

Its function is as follows. This protein binds specifically to 23S rRNA; its binding is stimulated by other ribosomal proteins, e.g. L4, L17, and L20. It is important during the early stages of 50S assembly. It makes multiple contacts with different domains of the 23S rRNA in the assembled 50S subunit and ribosome. In terms of biological role, the globular domain of the protein is located near the polypeptide exit tunnel on the outside of the subunit, while an extended beta-hairpin is found that lines the wall of the exit tunnel in the center of the 70S ribosome. This chain is Large ribosomal subunit protein uL22, found in Aeromonas salmonicida (strain A449).